The following is a 313-amino-acid chain: tRNA dimethylallyltransferase (313 aa).

11 to 18 provides a ligand contact to ATP; the sequence is GPTAGGKT. 13-18 serves as a coordination point for substrate; that stretch reads TAGGKT. Interaction with substrate tRNA stretches follow at residues 36–39, 160–164, and 243–248; these read DSAL, QRIGR, and RCVGYR.

It belongs to the IPP transferase family. As to quaternary structure, monomer. Mg(2+) is required as a cofactor.

The catalysed reaction is adenosine(37) in tRNA + dimethylallyl diphosphate = N(6)-dimethylallyladenosine(37) in tRNA + diphosphate. Catalyzes the transfer of a dimethylallyl group onto the adenine at position 37 in tRNAs that read codons beginning with uridine, leading to the formation of N6-(dimethylallyl)adenosine (i(6)A). This Neisseria meningitidis serogroup B (strain ATCC BAA-335 / MC58) protein is tRNA dimethylallyltransferase.